The sequence spans 438 residues: Thymidine phosphorylase (438 aa).

It belongs to the thymidine/pyrimidine-nucleoside phosphorylase family. Homodimer.

It carries out the reaction thymidine + phosphate = 2-deoxy-alpha-D-ribose 1-phosphate + thymine. It functions in the pathway pyrimidine metabolism; dTMP biosynthesis via salvage pathway; dTMP from thymine: step 1/2. Its function is as follows. The enzymes which catalyze the reversible phosphorolysis of pyrimidine nucleosides are involved in the degradation of these compounds and in their utilization as carbon and energy sources, or in the rescue of pyrimidine bases for nucleotide synthesis. This is Thymidine phosphorylase from Burkholderia orbicola (strain MC0-3).